The chain runs to 39 residues: Potassium channel toxin alpha-KTx 2.9 (39 aa).

Cystine bridges form between Cys7/Cys29, Cys13/Cys34, and Cys17/Cys36. Asn39 bears the Asparagine amide mark.

It belongs to the short scorpion toxin superfamily. Potassium channel inhibitor family. Alpha-KTx 02 subfamily. Expressed by the venom gland.

It is found in the secreted. In terms of biological role, blocks Kv1.3/KCNA3 voltage-gated potassium channels of human T-lymphocytes (Kd=0.25 nM). This Centruroides elegans (Bark scorpion) protein is Potassium channel toxin alpha-KTx 2.9.